We begin with the raw amino-acid sequence, 293 residues long: MNRLFSGRSDMPFALLLLAPSLLLLGGLVAWPMVSNIEISFLRLPLNPNIESTFVGVSNYVRILSDPGFWHSLWMTVWYTALVVAGSTVLGLAVAMFFNREFRLRKTARSLVILSYVTPSISLVFAWKYMFNNGYGIVNYLGVDLLHLYEQAPLWFDNPGSSFVLVVLFAIWRYFPYAFISFLAILQTIDKSLYEAAEMDGANAWQRFRIVTLPAIMPVLATVVTLRTIWMFYMFADVYLLTTKVDILGVYLYKTAFAFNDLGKAAAISVVLFIIIFAVILLTRKRVNLNGNK.

Topologically, residues 1-12 (MNRLFSGRSDMP) are periplasmic. The chain crosses the membrane as a helical span at residues 13–33 (FALLLLAPSLLLLGGLVAWPM). The Cytoplasmic segment spans residues 34 to 77 (VSNIEISFLRLPLNPNIESTFVGVSNYVRILSDPGFWHSLWMTV). In terms of domain architecture, ABC transmembrane type-1 spans 73–283 (LWMTVWYTAL…IIIFAVILLT (211 aa)). Residues 78 to 98 (WYTALVVAGSTVLGLAVAMFF) traverse the membrane as a helical segment. Over 99-110 (NREFRLRKTARS) the chain is Periplasmic. Residues 111-131 (LVILSYVTPSISLVFAWKYMF) traverse the membrane as a helical segment. The Cytoplasmic segment spans residues 132-135 (NNGY). The helical transmembrane segment at 136–156 (GIVNYLGVDLLHLYEQAPLWF) threads the bilayer. Residues 157-162 (DNPGSS) are Periplasmic-facing. A helical membrane pass occupies residues 163 to 183 (FVLVVLFAIWRYFPYAFISFL). The Cytoplasmic segment spans residues 184–214 (AILQTIDKSLYEAAEMDGANAWQRFRIVTLP). A helical membrane pass occupies residues 215 to 235 (AIMPVLATVVTLRTIWMFYMF). The Periplasmic segment spans residues 236–261 (ADVYLLTTKVDILGVYLYKTAFAFND). Residues 262-282 (LGKAAAISVVLFIIIFAVILL) traverse the membrane as a helical segment. Over 283-293 (TRKRVNLNGNK) the chain is Cytoplasmic.

This sequence belongs to the binding-protein-dependent transport system permease family. MalFG subfamily.

Its subcellular location is the cell inner membrane. Probably part of the binding-protein-dependent transport system YcjNOP. Probably responsible for the translocation of the substrate across the membrane. The sequence is that of Inner membrane ABC transporter permease protein YcjO (ycjO) from Escherichia coli (strain K12).